Consider the following 168-residue polypeptide: Transcription antitermination protein NusB (168 aa).

This sequence belongs to the NusB family.

Functionally, involved in transcription antitermination. Required for transcription of ribosomal RNA (rRNA) genes. Binds specifically to the boxA antiterminator sequence of the ribosomal RNA (rrn) operons. This chain is Transcription antitermination protein NusB, found in Chlamydia trachomatis serovar A (strain ATCC VR-571B / DSM 19440 / HAR-13).